Consider the following 1733-residue polypeptide: Gag-Pol polyprotein (1733 aa).

Gly-2 carries N-myristoyl glycine; by host lipidation. The segment covering 108-121 (LPTAPVLPPGPSAQ) has biased composition (pro residues). Disordered regions lie at residues 108-218 (LPTA…LRMG), 449-469 (KEERRRAEDEQRERERDRRRH), and 511-550 (WAKDCPKKPRGPRGPRPQTSLLTLGDXGGQGQEPPPEPRI). The PTAP/PSAP motif signature appears at 109-112 (PTAP). The short motif at 128–132 (LYPAL) is the LYPX(n)L motif element. The PPXY motif signature appears at 161 to 164 (PPPY). A Phosphoserine; by host modification is found at Ser-190. A coiled-coil region spans residues 436–476 (EEREERIRREIEEKEERRRAEDEQRERERDRRRHREMSKLL). Residues 449–464 (KEERRRAEDEQRERER) are compositionally biased toward basic and acidic residues. A CCHC-type zinc finger spans residues 500–517 (DQCAYCKEKGHWAKDCPK). Over residues 526-535 (RPQTSLLTLG) the composition is skewed to low complexity. The region spanning 559–629 (VTFLVDTGAQ…CPYPLLGRDL (71 aa)) is the Peptidase A2 domain. Catalysis depends on Asp-564, which acts as the Protease; shared with dimeric partner. RNA contacts are provided by Tyr-721, Asp-771, Arg-773, and Pro-787. The region spanning 739–930 (LDQGILVPCQ…KQVKYLGYLL (192 aa)) is the Reverse transcriptase domain. Asp-807 contributes to the Mg(2+) binding site. RNA contacts are provided by Asn-851 and Pro-853. Positions 881 and 882 each coordinate Mg(2+). DNA-binding residues include Arg-941, Arg-955, Arg-958, and Phe-966. Residues Lys-1054 and Lys-1055 each coordinate RNA. Trp-1063 is a DNA binding site. Residue Lys-1082 coordinates RNA. Arg-1113 serves as a coordination point for DNA. In terms of domain architecture, RNase H type-1 spans 1172–1318 (PDADYTWYTD…ADQAAREAAM (147 aa)). Asp-1181 contacts Mg(2+). 2 residues coordinate RNA: Ser-1184 and Leu-1186. Residues Gln-1187, Ser-1214, and Gln-1216 each contribute to the DNA site. 2 residues coordinate Mg(2+): Glu-1219 and Asp-1240. 2 residues coordinate RNA: Arg-1242 and Arg-1266. 3 residues coordinate Mg(2+): Asp-1310, Asp-1453, and Asp-1512. The Integrase catalytic domain maps to 1442-1600 (RGHRPGTHWE…TPYEILYGAP (159 aa)).

In terms of assembly, homohexamer. Further associates as homomultimer. The virus core is composed of a lattice formed from hexagonal rings, each containing six capsid monomers. Homodimer. The protease is a homodimer, whose active site consists of two apposed aspartic acid residues. The reverse transcriptase is a monomer. The cofactor is Mg(2+). Requires Mn(2+) as cofactor. In terms of processing, specific enzymatic cleavages by the viral protease yield mature proteins. The protease is released by autocatalytic cleavage. The polyprotein is cleaved during and after budding, this process is termed maturation. Sumoylated. Required for virus replication. Post-translationally, phosphorylated on serine residues.

It is found in the host cell membrane. The protein resides in the virion. The enzyme catalyses DNA(n) + a 2'-deoxyribonucleoside 5'-triphosphate = DNA(n+1) + diphosphate. It catalyses the reaction Endonucleolytic cleavage to 5'-phosphomonoester.. In terms of biological role, plays a role in budding and is processed by the viral protease during virion maturation outside the cell. During budding, it recruits, in a PPXY-dependent or independent manner, Nedd4-like ubiquitin ligases that conjugate ubiquitin molecules to Gag, or to Gag binding host factors. Interaction with HECT ubiquitin ligases probably link the viral protein to the host ESCRT pathway and facilitate release. Its function is as follows. Targets Gag and gag-pol polyproteins to the plasma membrane via a multipartite membrane binding signal, that includes its myristoylated N-terminus. Also mediates nuclear localization of the pre-integration complex. Functionally, forms the spherical core of the virion that encapsulates the genomic RNA-nucleocapsid complex. Involved in the packaging and encapsidation of two copies of the genome. Binds with high affinity to conserved UCUG elements within the packaging signal, located near the 5'-end of the genome. This binding is dependent on genome dimerization. In terms of biological role, the aspartyl protease mediates proteolytic cleavages of Gag and Gag-Pol polyproteins during or shortly after the release of the virion from the plasma membrane. Cleavages take place as an ordered, step-wise cascade to yield mature proteins. This process is called maturation. Displays maximal activity during the budding process just prior to particle release from the cell. Its function is as follows. Multifunctional enzyme that converts the viral dimeric RNA genome into dsDNA in the cytoplasm, shortly after virus entry into the cell. This enzyme displays a DNA polymerase activity that can copy either DNA or RNA templates, and a ribonuclease H (RNase H) activity that cleaves the RNA strand of RNA-DNA heteroduplexes in a partially processive 3' to 5' endonucleasic mode. Conversion of viral genomic RNA into dsDNA requires many steps. A tRNA binds to the primer-binding site (PBS) situated at the 5' end of the viral RNA. RT uses the 3' end of the tRNA primer to perform a short round of RNA-dependent minus-strand DNA synthesis. The reading proceeds through the U5 region and ends after the repeated (R) region which is present at both ends of viral RNA. The portion of the RNA-DNA heteroduplex is digested by the RNase H, resulting in a ssDNA product attached to the tRNA primer. This ssDNA/tRNA hybridizes with the identical R region situated at the 3' end of viral RNA. This template exchange, known as minus-strand DNA strong stop transfer, can be either intra- or intermolecular. RT uses the 3' end of this newly synthesized short ssDNA to perform the RNA-dependent minus-strand DNA synthesis of the whole template. RNase H digests the RNA template except for a polypurine tract (PPT) situated at the 5' end of the genome. It is not clear if both polymerase and RNase H activities are simultaneous. RNase H probably can proceed both in a polymerase-dependent (RNA cut into small fragments by the same RT performing DNA synthesis) and a polymerase-independent mode (cleavage of remaining RNA fragments by free RTs). Secondly, RT performs DNA-directed plus-strand DNA synthesis using the PPT that has not been removed by RNase H as primers. PPT and tRNA primers are then removed by RNase H. The 3' and 5' ssDNA PBS regions hybridize to form a circular dsDNA intermediate. Strand displacement synthesis by RT to the PBS and PPT ends produces a blunt ended, linear dsDNA copy of the viral genome that includes long terminal repeats (LTRs) at both ends. Functionally, catalyzes viral DNA integration into the host chromosome, by performing a series of DNA cutting and joining reactions. This enzyme activity takes place after virion entry into a cell and reverse transcription of the RNA genome in dsDNA. The first step in the integration process is 3' processing. This step requires a complex comprising the viral genome, matrix protein and integrase. This complex is called the pre-integration complex (PIC). The integrase protein removes 2 nucleotides from each 3' end of the viral DNA, leaving recessed CA OH's at the 3' ends. In the second step that requires cell division, the PIC enters cell nucleus. In the third step, termed strand transfer, the integrase protein joins the previously processed 3' ends to the 5' ends of strands of target cellular DNA at the site of integration. The last step is viral DNA integration into host chromosome. This Homo sapiens (Human) protein is Gag-Pol polyprotein (gag-pol).